Here is a 367-residue protein sequence, read N- to C-terminus: Pre-small/secreted glycoprotein (367 aa).

Positions 1–33 are cleaved as a signal peptide; that stretch reads MGSGYQLLQLPRERFRKTSFLVWVIILFQRAIS. Residue N41 is glycosylated (N-linked (GlcNAc...) asparagine; by host). Cystine bridges form between C109/C136 and C122/C148. Residues N205, N229, N239, N258, and N269 are each glycosylated (N-linked (GlcNAc...) asparagine; by host).

The protein belongs to the filoviruses glycoprotein family. Homodimer; disulfide-linked. The homodimers are linked by two disulfide bonds in a parallel orientation. In terms of assembly, monomer. In terms of processing, this precursor is processed into mature sGP and delta-peptide by host furin or furin-like proteases. The cleavage site corresponds to the furin optimal cleavage sequence [KR]-X-[KR]-R. Post-translationally, N-glycosylated. O-glycosylated.

Its subcellular location is the secreted. Functionally, seems to possess an anti-inflammatory activity as it can reverse the barrier-decreasing effects of TNF alpha. Might therefore contribute to the lack of inflammatory reaction seen during infection in spite the of extensive necrosis and massive virus production. Does not seem to be involved in activation of primary macrophages. Does not seem to interact specifically with neutrophils. Viroporin that permeabilizes mammalian cell plasma membranes. It acts by altering permeation of ionic compounds and small molecules. This activity may lead to viral enterotoxic activity. This is Pre-small/secreted glycoprotein (GP) from Epomops franqueti (Franquet's epauletted fruit bat).